The following is a 372-amino-acid chain: Glutamate 5-kinase (372 aa).

Lys14 contacts ATP. Substrate contacts are provided by Ser54, Asp141, and Asn153. 173 to 174 (TD) provides a ligand contact to ATP. The PUA domain occupies 280–358 (RGTLVLDDGA…DAIESLLGYS (79 aa)).

The protein belongs to the glutamate 5-kinase family.

The protein localises to the cytoplasm. It carries out the reaction L-glutamate + ATP = L-glutamyl 5-phosphate + ADP. It participates in amino-acid biosynthesis; L-proline biosynthesis; L-glutamate 5-semialdehyde from L-glutamate: step 1/2. In terms of biological role, catalyzes the transfer of a phosphate group to glutamate to form L-glutamate 5-phosphate. The sequence is that of Glutamate 5-kinase from Pseudomonas entomophila (strain L48).